We begin with the raw amino-acid sequence, 1121 residues long: Anillin (1121 aa).

The residue at position 1 (M1) is an N-acetylmethionine. The span at 1-25 (MDPFTEKLLERTRARRENLQRKMAE) shows a compositional bias: basic and acidic residues. Positions 1-45 (MDPFTEKLLERTRARRENLQRKMAERPTAVARSAPHAKRGREPLS) are required for ubiquitination. Disordered regions lie at residues 1–113 (MDPF…AAIS), 125–196 (ADRG…PVGR), and 212–402 (DDVS…TKAI). Positions 1-154 (MDPFTEKLLE…MQRLAEQRRH (154 aa)) are interaction with CD2AP. The segment at 1–228 (MDPFTEKLLE…AKQNSVQEQP (228 aa)) is nuclear localization. Phosphoserine occurs at positions 73 and 96. The span at 96–109 (SPMPAPRQAKPPAP) shows a compositional bias: pro residues. The span at 130 to 143 (NSGSEASATSSVKT) shows a compositional bias: polar residues. The segment covering 147–157 (RLAEQRRHWDS) has biased composition (basic and acidic residues). S180 is modified (phosphoserine). T192 is modified (phosphothreonine). Positions 216 to 228 (HSSAKQNSVQEQP) are enriched in polar residues. Phosphoserine occurs at positions 223, 250, and 259. Residues 229-671 (GTACLSKSSS…RDLLYSIDAY (443 aa)) are interaction with F-actin. The segment covering 234-250 (SKSSSASGASASINSSS) has biased composition (low complexity). Residues 282 to 298 (SASVSSSVKASSPVTAA) are compositionally biased toward low complexity. Over residues 303–314 (ENREAQNPELLH) the composition is skewed to basic and acidic residues. T316 is modified (phosphothreonine). A phosphoserine mark is found at S318 and S334. T359 is modified (phosphothreonine). Residue K366 is modified to N6-acetyllysine. The segment covering 368–384 (FLERFGERCQEHSKESP) has biased composition (basic and acidic residues). A compositionally biased stretch (polar residues) spans 391-401 (KTPNITPNTKA). T392 and T396 each carry phosphothreonine. 2 positions are modified to phosphoserine: S414 and S444. The tract at residues 490–511 (NEPAVKLSSTEPAGSTESEMTK) is disordered. Over residues 496–511 (LSSTEPAGSTESEMTK) the composition is skewed to polar residues. Phosphoserine is present on residues S513, S548, and S556. Positions 564 to 599 (FSDVLEEGELDVEKSQEEMDQVGAENSEEQEDALNI) form a coiled coil. A compositionally biased stretch (polar residues) spans 623-635 (SPPSELRDSNLSA). The segment at 623–656 (SPPSELRDSNLSAASPKPGKFQRTRVPRAESADS) is disordered. Phosphoserine occurs at positions 637, 653, 656, and 659. A Phosphotyrosine modification is found at Y666. A phosphoserine mark is found at S673, S683, S787, and S924. The tract at residues 725-1121 (QQTVIYQASQ…DACYKPVGKP (397 aa)) is localization to the cleavage furrow. A PH domain is found at 980–1104 (AVEEKGFLTI…WMQKLNQVIV (125 aa)).

In terms of assembly, interacts with F-actin. Interacts with CD2AP. May interact with RHOA. Interacts with FZR1/CDH1 during mitotic exit. In terms of processing, phosphorylated during mitosis. Post-translationally, ubiquitinated, and this requires FZR1/CDH1.

It localises to the nucleus. It is found in the cytoplasm. The protein localises to the cytoskeleton. The protein resides in the cell cortex. Its subcellular location is the cell projection. It localises to the bleb. In terms of biological role, required for cytokinesis. Essential for the structural integrity of the cleavage furrow and for completion of cleavage furrow ingression. Plays a role in bleb assembly during metaphase and anaphase of mitosis. May play a significant role in podocyte cell migration. In Mus musculus (Mouse), this protein is Anillin (Anln).